Consider the following 269-residue polypeptide: 3-methyl-2-oxobutanoate hydroxymethyltransferase (269 aa).

D46 and D85 together coordinate Mg(2+). 3-methyl-2-oxobutanoate-binding positions include 46 to 47, D85, and K114; that span reads DS. Residue E116 coordinates Mg(2+). E183 (proton acceptor) is an active-site residue.

This sequence belongs to the PanB family. In terms of assembly, homodecamer; pentamer of dimers. It depends on Mg(2+) as a cofactor.

Its subcellular location is the cytoplasm. It carries out the reaction 3-methyl-2-oxobutanoate + (6R)-5,10-methylene-5,6,7,8-tetrahydrofolate + H2O = 2-dehydropantoate + (6S)-5,6,7,8-tetrahydrofolate. It functions in the pathway cofactor biosynthesis; (R)-pantothenate biosynthesis; (R)-pantoate from 3-methyl-2-oxobutanoate: step 1/2. In terms of biological role, catalyzes the reversible reaction in which hydroxymethyl group from 5,10-methylenetetrahydrofolate is transferred onto alpha-ketoisovalerate to form ketopantoate. The polypeptide is 3-methyl-2-oxobutanoate hydroxymethyltransferase (Methylococcus capsulatus (strain ATCC 33009 / NCIMB 11132 / Bath)).